The following is a 71-amino-acid chain: Long neurotoxin 3 (71 aa).

5 disulfide bridges follow: cysteine 3/cysteine 20, cysteine 14/cysteine 41, cysteine 26/cysteine 30, cysteine 45/cysteine 56, and cysteine 57/cysteine 62.

This sequence belongs to the three-finger toxin family. Long-chain subfamily. Type II alpha-neurotoxin sub-subfamily. In terms of tissue distribution, expressed by the venom gland.

Its subcellular location is the secreted. Binds with high affinity to muscular (alpha-1/CHRNA1) and neuronal (alpha-7/CHRNA7) nicotinic acetylcholine receptor (nAChR) and inhibits acetylcholine from binding to the receptor, thereby impairing neuromuscular and neuronal transmission. This chain is Long neurotoxin 3, found in Naja naja (Indian cobra).